The sequence spans 278 residues: Bis(5'-nucleosyl)-tetraphosphatase, symmetrical (278 aa).

This sequence belongs to the Ap4A hydrolase family.

It catalyses the reaction P(1),P(4)-bis(5'-adenosyl) tetraphosphate + H2O = 2 ADP + 2 H(+). Functionally, hydrolyzes diadenosine 5',5'''-P1,P4-tetraphosphate to yield ADP. In Methylococcus capsulatus (strain ATCC 33009 / NCIMB 11132 / Bath), this protein is Bis(5'-nucleosyl)-tetraphosphatase, symmetrical.